Here is a 536-residue protein sequence, read N- to C-terminus: Methyl-accepting chemotaxis aspartate transducer (536 aa).

The Cytoplasmic segment spans residues 1–10 (MFNRIRISTS). Residues 11–31 (LFLLLISFCIMQLISTGLSYV) form a helical membrane-spanning segment. Over 32 to 188 (ALRADNHNLE…ASSQQAYGWS (157 aa)) the chain is Periplasmic. The the 3 Arg may form a positively charged pocket, which binds the alpha-carboxyl group of the attractant AA stretch occupies residues 64 to 73 (RNTLNRAGTR). The chain crosses the membrane as a helical span at residues 189–209 (IWLVAGAVLMLLVVTLSAMWW). Topologically, residues 210–536 (LRTMLVQPLN…VKETLDCQTA (327 aa)) are cytoplasmic. Positions 212–264 (TMLVQPLNIIRGHFERIASGDLSAPIEVYGRNEISQLFASLQRMQQSLIGTVG) constitute an HAMP domain. A Methyl-accepting transducer domain is found at 269-498 (GAESILIGLQ…ESASAAAALE (230 aa)). Glutamine 293 is modified (glutamate methyl ester (Gln)). Glutamate 300 is subject to Glutamate methyl ester (Glu). The residue at position 307 (glutamine 307) is a Glutamate methyl ester (Gln). Glutamate 489 and glutamate 498 each carry glutamate methyl ester (Glu).

The protein belongs to the methyl-accepting chemotaxis (MCP) protein family.

The protein resides in the cell inner membrane. In terms of biological role, this protein responds to changes in Asp concentration in the environment, transduces a signal from the outside to the inside of the cell, and facilitates sensory adaptation through various levels of methylation. Its function is as follows. Chemotactic-signal transducers respond to changes in the concentration of attractants and repellents in the environment, transduce a signal from the outside to the inside of the cell, and facilitate sensory adaptation through the variation of the level of methylation. Attractants increase the level of methylation while repellents decrease the level of methylation, the methyl groups are added by the methyltransferase CheR and removed by the methylesterase CheB. The sequence is that of Methyl-accepting chemotaxis aspartate transducer (tas) from Klebsiella aerogenes (strain ATCC 13048 / DSM 30053 / CCUG 1429 / JCM 1235 / KCTC 2190 / NBRC 13534 / NCIMB 10102 / NCTC 10006 / CDC 819-56) (Enterobacter aerogenes).